The primary structure comprises 89 residues: HssA/B-like protein 22 (89 aa).

The protein belongs to the hssA/B family.

The protein is HssA/B-like protein 22 (hssl22) of Dictyostelium discoideum (Social amoeba).